The chain runs to 338 residues: Beta-ketoacyl-[acyl-carrier-protein] synthase III 2 (338 aa).

Residues Cys-119 and His-255 contribute to the active site. Positions Gln-256–Arg-260 are ACP-binding. Residue Asn-285 is part of the active site.

Belongs to the thiolase-like superfamily. FabH family. As to quaternary structure, homodimer.

It is found in the cytoplasm. The enzyme catalyses malonyl-[ACP] + acetyl-CoA + H(+) = 3-oxobutanoyl-[ACP] + CO2 + CoA. It participates in lipid metabolism; fatty acid biosynthesis. In terms of biological role, catalyzes the condensation reaction of fatty acid synthesis by the addition to an acyl acceptor of two carbons from malonyl-ACP. Catalyzes the first condensation reaction which initiates fatty acid synthesis and may therefore play a role in governing the total rate of fatty acid production. Possesses both acetoacetyl-ACP synthase and acetyl transacylase activities. Its substrate specificity determines the biosynthesis of branched-chain and/or straight-chain of fatty acids. The polypeptide is Beta-ketoacyl-[acyl-carrier-protein] synthase III 2 (Deinococcus radiodurans (strain ATCC 13939 / DSM 20539 / JCM 16871 / CCUG 27074 / LMG 4051 / NBRC 15346 / NCIMB 9279 / VKM B-1422 / R1)).